The sequence spans 358 residues: UDP-N-acetylglucosamine--N-acetylmuramyl-(pentapeptide) pyrophosphoryl-undecaprenol N-acetylglucosamine transferase (358 aa).

Residues 10-12 (TGG), Asn124, Ser196, and Gln293 each bind UDP-N-acetyl-alpha-D-glucosamine.

The protein belongs to the glycosyltransferase 28 family. MurG subfamily.

Its subcellular location is the cell membrane. The enzyme catalyses di-trans,octa-cis-undecaprenyl diphospho-N-acetyl-alpha-D-muramoyl-L-alanyl-D-glutamyl-meso-2,6-diaminopimeloyl-D-alanyl-D-alanine + UDP-N-acetyl-alpha-D-glucosamine = di-trans,octa-cis-undecaprenyl diphospho-[N-acetyl-alpha-D-glucosaminyl-(1-&gt;4)]-N-acetyl-alpha-D-muramoyl-L-alanyl-D-glutamyl-meso-2,6-diaminopimeloyl-D-alanyl-D-alanine + UDP + H(+). Its pathway is cell wall biogenesis; peptidoglycan biosynthesis. Cell wall formation. Catalyzes the transfer of a GlcNAc subunit on undecaprenyl-pyrophosphoryl-MurNAc-pentapeptide (lipid intermediate I) to form undecaprenyl-pyrophosphoryl-MurNAc-(pentapeptide)GlcNAc (lipid intermediate II). This chain is UDP-N-acetylglucosamine--N-acetylmuramyl-(pentapeptide) pyrophosphoryl-undecaprenol N-acetylglucosamine transferase, found in Exiguobacterium sp. (strain ATCC BAA-1283 / AT1b).